Consider the following 538-residue polypeptide: Cytochrome c-552 (538 aa).

A signal peptide spans 1–55 (MKIYLRFVWILIIILNFLLNLFITTNGVIIVNAFKKSLIVAASFASLSLFNSATA). Residue H133 participates in heme c binding. Residues C161, C164, and K165 each contribute to the heme site. Positions 199, 202, 203, 264, 267, and 268 each coordinate heme c. Ca(2+) contacts are provided by E270, Y271, K316, and Q318. Y271 serves as a coordination point for substrate. H319 provides a ligand contact to substrate. Positions 330, 337, 340, 341, 356, 369, 372, 373, and 448 each coordinate heme c.

The protein belongs to the cytochrome c-552 family. Requires Ca(2+) as cofactor. Heme c serves as cofactor.

Its subcellular location is the periplasm. The catalysed reaction is 6 Fe(III)-[cytochrome c] + NH4(+) + 2 H2O = 6 Fe(II)-[cytochrome c] + nitrite + 8 H(+). It functions in the pathway nitrogen metabolism; nitrate reduction (assimilation). Catalyzes the reduction of nitrite to ammonia, consuming six electrons in the process. The polypeptide is Cytochrome c-552 (Haemophilus influenzae (strain ATCC 51907 / DSM 11121 / KW20 / Rd)).